A 206-amino-acid polypeptide reads, in one-letter code: LexA repressor (206 aa).

Positions Arg-28–Lys-48 form a DNA-binding region, H-T-H motif. Residues Ser-123 and Lys-160 each act as for autocatalytic cleavage activity in the active site.

The protein belongs to the peptidase S24 family. In terms of assembly, homodimer.

The catalysed reaction is Hydrolysis of Ala-|-Gly bond in repressor LexA.. In terms of biological role, represses a number of genes involved in the response to DNA damage (SOS response), including recA and lexA. In the presence of single-stranded DNA, RecA interacts with LexA causing an autocatalytic cleavage which disrupts the DNA-binding part of LexA, leading to derepression of the SOS regulon and eventually DNA repair. The chain is LexA repressor from Shewanella putrefaciens (strain CN-32 / ATCC BAA-453).